The following is a 1056-amino-acid chain: ATP-dependent helicase wrn-1 (1056 aa).

A disordered region spans residues 1–102 (MISDDDDLPS…SSSDDSDQGD (102 aa)). 2 tandem repeats follow at residues 17–26 (NEELPETEPE) and 28–37 (NDELPETEPE). The interval 17 to 37 (NEELPETEPEDNDELPETEPE) is 2 X 10 AA repeats of N-[ED]-E-L-P-E-T-E-P-E. Positions 19 to 38 (ELPETEPEDNDELPETEPES) are enriched in acidic residues. Positions 43–53 (PTVTSNKTENQ) are enriched in polar residues. A compositionally biased stretch (acidic residues) spans 54–63 (VADEDYDSFD). Positions 236 to 406 (VRNVLGGKDQ…IANLRLRKPL (171 aa)) constitute a Helicase ATP-binding domain. Residue 249-256 (MSTGYGKS) participates in ATP binding. A DEAH box motif is present at residues 348–351 (DEAH). The 157-residue stretch at 427–583 (MAEDLGLFMK…NLTMMLRQLE (157 aa)) folds into the Helicase C-terminal domain. Positions 591, 614, 615, and 618 each coordinate Zn(2+). The disordered stretch occupies residues 749–771 (KEKAAPSTVPGASRSQSTKSSTE). A compositionally biased stretch (polar residues) spans 761–771 (SRSQSTKSSTE). One can recognise an HRDC domain in the interval 806-886 (PEKIDQLRSR…VQFSKETGIA (81 aa)). Residues 1018–1056 (QEKPDIQSMPSTSNPSTIKTVPSTPSSSLRAPPLKKFKL) are disordered. A compositionally biased stretch (polar residues) spans 1025–1046 (SMPSTSNPSTIKTVPSTPSSSL).

It belongs to the helicase family. RecQ subfamily. Zn(2+) serves as cofactor.

Its subcellular location is the nucleus. The enzyme catalyses Couples ATP hydrolysis with the unwinding of duplex DNA by translocating in the 3'-5' direction.. The catalysed reaction is ATP + H2O = ADP + phosphate + H(+). Its function is as follows. Essential for the formation of DNA replication focal centers; stably associates with foci elements generating binding sites for RP-A. Exhibits a magnesium-dependent ATP-dependent 3'-5' DNA-helicase activity. May be involved in the control of genomic stability. This chain is ATP-dependent helicase wrn-1 (wrn-1), found in Caenorhabditis elegans.